We begin with the raw amino-acid sequence, 607 residues long: Elongation factor 4 (607 aa).

Residues 11 to 193 (GKIRNFSIIA…QIVEKVPAPT (183 aa)) enclose the tr-type G domain. GTP contacts are provided by residues 23–28 (DHGKST) and 140–143 (NKID).

It belongs to the TRAFAC class translation factor GTPase superfamily. Classic translation factor GTPase family. LepA subfamily.

The protein resides in the cell membrane. It catalyses the reaction GTP + H2O = GDP + phosphate + H(+). Its function is as follows. Required for accurate and efficient protein synthesis under certain stress conditions. May act as a fidelity factor of the translation reaction, by catalyzing a one-codon backward translocation of tRNAs on improperly translocated ribosomes. Back-translocation proceeds from a post-translocation (POST) complex to a pre-translocation (PRE) complex, thus giving elongation factor G a second chance to translocate the tRNAs correctly. Binds to ribosomes in a GTP-dependent manner. This is Elongation factor 4 from Streptococcus pneumoniae (strain JJA).